A 322-amino-acid polypeptide reads, in one-letter code: TATA box-binding protein-associated factor RNA polymerase I subunit D (322 aa).

2 disordered regions span residues 1-70 (MAQS…SIEP) and 82-116 (FKKK…RITR). Serine 23 carries the post-translational modification Phosphoserine. Residues 82 to 107 (FKKKKRKKRKKRKYEPKLRPRGRPRG) show a composition bias toward basic residues. Position 137 is a phosphoserine (serine 137). Positions 198–219 (YMDDDGSLSPIEEPLTEDEATN) are disordered. Phosphoserine is present on serine 232. Residues 257-267 (FSKKAKDATHR) show a composition bias toward basic and acidic residues. Positions 257–276 (FSKKAKDATHREKGHRRTLK) are disordered.

As to quaternary structure, component of the transcription factor SL1/TIF-IB complex, composed of TBP and at least TAF1A, TAF1B, TAF1C and TAF1D. Interacts with UBTF.

Its subcellular location is the nucleus. Its function is as follows. Component of the transcription factor SL1/TIF-IB complex, which is involved in the assembly of the PIC (preinitiation complex) during RNA polymerase I-dependent transcription. The rate of PIC formation probably is primarily dependent on the rate of association of SL1/TIF-IB with the rDNA promoter. SL1/TIF-IB is involved in stabilization of nucleolar transcription factor 1/UBTF on rDNA. Formation of SL1/TIF-IB excludes the association of TBP with TFIID subunits. This Mus musculus (Mouse) protein is TATA box-binding protein-associated factor RNA polymerase I subunit D (Taf1d).